The primary structure comprises 128 residues: Large ribosomal subunit protein bL12 (128 aa).

As to quaternary structure, homodimer. Part of the 50S ribosomal subunit; present in 6 copies per ribosome. Forms part of the ribosomal stalk which helps the ribosome interact with GTP-bound translation factors. Forms a heptameric L10(L12)2(L12)2(L12)2 complex, where L10 forms an elongated spine to which 3 L12 dimers bind in a sequential fashion.

Functionally, forms part of the ribosomal stalk which helps the ribosome interact with GTP-bound translation factors. Is thus essential for accurate translation. The sequence is that of Large ribosomal subunit protein bL12 from Thermotoga maritima (strain ATCC 43589 / DSM 3109 / JCM 10099 / NBRC 100826 / MSB8).